The sequence spans 77 residues: Acyl carrier protein (77 aa).

A Carrier domain is found at 2–77 (ASIEKRIKEI…DAIDYITDHT (76 aa)). S37 bears the O-(pantetheine 4'-phosphoryl)serine mark.

This sequence belongs to the acyl carrier protein (ACP) family. In terms of processing, 4'-phosphopantetheine is transferred from CoA to a specific serine of apo-ACP by AcpS. This modification is essential for activity because fatty acids are bound in thioester linkage to the sulfhydryl of the prosthetic group.

The protein resides in the cytoplasm. It functions in the pathway lipid metabolism; fatty acid biosynthesis. Functionally, carrier of the growing fatty acid chain in fatty acid biosynthesis. The polypeptide is Acyl carrier protein (Geobacter sp. (strain M21)).